We begin with the raw amino-acid sequence, 442 residues long: L-seryl-tRNA(Sec) selenium transferase (442 aa).

K284 carries the N6-(pyridoxal phosphate)lysine modification.

Belongs to the SelA family. It depends on pyridoxal 5'-phosphate as a cofactor.

It is found in the cytoplasm. It catalyses the reaction L-seryl-tRNA(Sec) + selenophosphate + H(+) = L-selenocysteinyl-tRNA(Sec) + phosphate. Its pathway is aminoacyl-tRNA biosynthesis; selenocysteinyl-tRNA(Sec) biosynthesis; selenocysteinyl-tRNA(Sec) from L-seryl-tRNA(Sec) (bacterial route): step 1/1. Converts seryl-tRNA(Sec) to selenocysteinyl-tRNA(Sec) required for selenoprotein biosynthesis. In Campylobacter fetus subsp. fetus (strain 82-40), this protein is L-seryl-tRNA(Sec) selenium transferase.